A 231-amino-acid chain; its full sequence is Phosphatidylserine decarboxylase proenzyme (231 aa).

Serine 200 (schiff-base intermediate with substrate; via pyruvic acid) is an active-site residue. Pyruvic acid (Ser); by autocatalysis is present on serine 200.

This sequence belongs to the phosphatidylserine decarboxylase family. PSD-A subfamily. As to quaternary structure, heterodimer of a large membrane-associated beta subunit and a small pyruvoyl-containing alpha subunit. Pyruvate is required as a cofactor. In terms of processing, is synthesized initially as an inactive proenzyme. Formation of the active enzyme involves a self-maturation process in which the active site pyruvoyl group is generated from an internal serine residue via an autocatalytic post-translational modification. Two non-identical subunits are generated from the proenzyme in this reaction, and the pyruvate is formed at the N-terminus of the alpha chain, which is derived from the carboxyl end of the proenzyme. The post-translation cleavage follows an unusual pathway, termed non-hydrolytic serinolysis, in which the side chain hydroxyl group of the serine supplies its oxygen atom to form the C-terminus of the beta chain, while the remainder of the serine residue undergoes an oxidative deamination to produce ammonia and the pyruvoyl prosthetic group on the alpha chain.

Its subcellular location is the cell membrane. It carries out the reaction a 1,2-diacyl-sn-glycero-3-phospho-L-serine + H(+) = a 1,2-diacyl-sn-glycero-3-phosphoethanolamine + CO2. The protein operates within phospholipid metabolism; phosphatidylethanolamine biosynthesis; phosphatidylethanolamine from CDP-diacylglycerol: step 2/2. Its function is as follows. Catalyzes the formation of phosphatidylethanolamine (PtdEtn) from phosphatidylserine (PtdSer). The chain is Phosphatidylserine decarboxylase proenzyme from Mycobacterium tuberculosis (strain ATCC 25177 / H37Ra).